We begin with the raw amino-acid sequence, 538 residues long: Dihomomethionine N-hydroxylase (538 aa).

A helical membrane pass occupies residues L8–L28.

The protein belongs to the cytochrome P450 family. Heme serves as cofactor. Highly expressed in cotyledons, leaves, stems and siliques. Detected in flowers and lateral roots, but not in the main root. Expressed only in the vascular bundles in apical plant parts.

The protein resides in the endoplasmic reticulum membrane. It catalyses the reaction an L-polyhomomethionine + 2 reduced [NADPH--hemoprotein reductase] + 2 O2 = an (E)-omega-(methylsulfanyl)-alkanal oxime + 2 oxidized [NADPH--hemoprotein reductase] + CO2 + 3 H2O + 2 H(+). The catalysed reaction is L-dihomomethionine + 2 reduced [NADPH--hemoprotein reductase] + 2 O2 = (E)-5-(methylsulfanyl)pentanal oxime + 2 oxidized [NADPH--hemoprotein reductase] + CO2 + 3 H2O + 2 H(+). The enzyme catalyses L-trihomomethionine + 2 reduced [NADPH--hemoprotein reductase] + 2 O2 = (E)-6-(methylsulfanyl)hexanal oxime + 2 oxidized [NADPH--hemoprotein reductase] + CO2 + 3 H2O + 2 H(+). Its function is as follows. Catalyzes the conversion of the short chain elongated methionines di-, tri-, and tetrahomomethionine to their respective aldoximes 5-methylthiopentanaldoxime, 6-methylthiohexanaldoxime, and 7-methylheptanaldoxime. This chain is Dihomomethionine N-hydroxylase (CYP79F1), found in Arabidopsis thaliana (Mouse-ear cress).